The primary structure comprises 180 residues: Transmembrane protein 190 (180 aa).

The signal sequence occupies residues 1–21 (MVGSGIPALGLLLLMQGSADG). Residues 22-81 (NGIQGFFYPWSCEGDVWDRESCGGQAAIENPNLCLRLRCCYRDGVCYHQRPDENMRRKHM) lie on the Extracellular side of the membrane. Residues 31 to 71 (WSCEGDVWDRESCGGQAAIENPNLCLRLRCCYRDGVCYHQR) enclose the P-type domain. Cystine bridges form between Cys33/Cys61, Cys43/Cys60, and Cys55/Cys67. A helical transmembrane segment spans residues 82-102 (WALGWTCGGLLFLITSICLFW). Topologically, residues 103 to 180 (WARRHDMLRL…EETEGGDEDD (78 aa)) are cytoplasmic. The span at 131–140 (KDRTPSEKKT) shows a compositional bias: basic and acidic residues. Positions 131 to 180 (KDRTPSEKKTPSVGSIPPAAPTEGALDVSGGTEGEGTEGGEETEGGDEDD) are disordered. Over residues 165–180 (EGTEGGEETEGGDEDD) the composition is skewed to acidic residues.

It localises to the membrane. This Bos taurus (Bovine) protein is Transmembrane protein 190 (TMEM190).